The primary structure comprises 281 residues: Nhr-229 coiled coil domain containing nccd-1 (281 aa).

In Caenorhabditis elegans, this protein is Nhr-229 coiled coil domain containing nccd-1.